The sequence spans 385 residues: Polyketide synthase 4 (385 aa).

Cys-157 is a catalytic residue.

Belongs to the thiolase-like superfamily. Chalcone/stilbene synthases family. Expressed in glandular trichomes.

Its subcellular location is the cytoplasm. Functionally, polyketide synthase responsible for the biosynthesis of secondary metabolites. The polypeptide is Polyketide synthase 4 (PKSG4) (Cannabis sativa (Hemp)).